The chain runs to 269 residues: Phosphonates import ATP-binding protein PhnC 2 (269 aa).

An ABC transporter domain is found at 2–246; sequence LRIDSLSKRY…VLNEIYGEED (245 aa). An ATP-binding site is contributed by 35–42; it reads GPSGAGKS. A disordered region spans residues 246 to 269; that stretch reads DWNASGPAQDSEENEAVSAGVATH.

The protein belongs to the ABC transporter superfamily. Phosphonates importer (TC 3.A.1.9.1) family. As to quaternary structure, the complex is composed of two ATP-binding proteins (PhnC), two transmembrane proteins (PhnE) and a solute-binding protein (PhnD).

It is found in the cell inner membrane. It carries out the reaction phosphonate(out) + ATP + H2O = phosphonate(in) + ADP + phosphate + H(+). Its function is as follows. Part of the ABC transporter complex PhnCDE involved in phosphonates import. Responsible for energy coupling to the transport system. This Synechococcus sp. (strain JA-2-3B'a(2-13)) (Cyanobacteria bacterium Yellowstone B-Prime) protein is Phosphonates import ATP-binding protein PhnC 2.